The following is a 182-amino-acid chain: Transcription termination/antitermination protein NusG (182 aa).

Positions 131 to 161 constitute a KOW domain; that stretch reads GEVVRVNDGPFADFNGTVEEVDYEKSRLKVS.

Belongs to the NusG family.

Its function is as follows. Participates in transcription elongation, termination and antitermination. This Vibrio cholerae serotype O1 (strain ATCC 39315 / El Tor Inaba N16961) protein is Transcription termination/antitermination protein NusG.